A 394-amino-acid chain; its full sequence is MKIAIAGSGYVGLSLAVLLAQHHEVKVIDVIKDKVESINNRKSPIKDEAIEKYLVEKELNLEASLDPAHVYKDVEYAIIATPTNYDVDLNQFDTSSVEAAIKTCMEYNDTCTIVIKSTIPEGYTKEVREKFNTDRIIFSPEFLRESKALYDNLYPSRIVVGTDLDDSELTKRAWQFADLLKGGAIKEEVPILVVAFNEAEVAKLFSNTYLATRVRYFNEIDTYSEVKGLNPKTIIDIVCYDPRIGSYYNNPSFGYGGYCLPKDTKQLKASFRDVPENLITAVVQSNKTRKDYIAGAILAKQPSVVGIYRLIMKSDSDNFRSSAVKGVMERLDNYGKEIVIYEPTIECDTFMGYRVIKSLDEFKNISDIVVANRMNDDLRDIQEKLYTRDLFGRE.

NAD(+) is bound by residues 2–19, V11, D29, K34, T83, T118, and E145; that span reads KIAI…AVLL. Residues 141–145, K203, N207, 248–252, and G256 each bind substrate; these read EFLRE and YNNPS. Y258 lines the NAD(+) pocket. The active-site Nucleophile is the C259. K262 contacts NAD(+). K313 contacts substrate. R320 provides a ligand contact to NAD(+).

It belongs to the UDP-glucose/GDP-mannose dehydrogenase family.

The enzyme catalyses UDP-alpha-D-glucose + 2 NAD(+) + H2O = UDP-alpha-D-glucuronate + 2 NADH + 3 H(+). It participates in nucleotide-sugar biosynthesis; UDP-alpha-D-glucuronate biosynthesis; UDP-alpha-D-glucuronate from UDP-alpha-D-glucose: step 1/1. In terms of biological role, catalyzes the formation of UDP-glucuronic acid which is required for capsular hyaluronic acid synthesis. Directly responsible for the transformation of some unencapsulated serotype-3 SP mutants to the encapsulated phenotype. The protein is UDP-glucose 6-dehydrogenase (cap3A) of Streptococcus pneumoniae.